Consider the following 477-residue polypeptide: Glycogen synthase (477 aa).

Residue Lys-15 participates in ADP-alpha-D-glucose binding.

The protein belongs to the glycosyltransferase 1 family. Bacterial/plant glycogen synthase subfamily.

It carries out the reaction [(1-&gt;4)-alpha-D-glucosyl](n) + ADP-alpha-D-glucose = [(1-&gt;4)-alpha-D-glucosyl](n+1) + ADP + H(+). The protein operates within glycan biosynthesis; glycogen biosynthesis. Its function is as follows. Synthesizes alpha-1,4-glucan chains using ADP-glucose. The chain is Glycogen synthase from Salmonella choleraesuis (strain SC-B67).